The sequence spans 336 residues: tRNA N6-adenosine threonylcarbamoyltransferase (336 aa).

The Fe cation site is built by H115, H119, and Y136. Residues 136–140 (YVAGG), D168, E185, and S266 contribute to the substrate site. D294 serves as a coordination point for Fe cation.

It belongs to the KAE1 / TsaD family. Fe(2+) serves as cofactor.

The protein resides in the cytoplasm. It carries out the reaction L-threonylcarbamoyladenylate + adenosine(37) in tRNA = N(6)-L-threonylcarbamoyladenosine(37) in tRNA + AMP + H(+). In terms of biological role, required for the formation of a threonylcarbamoyl group on adenosine at position 37 (t(6)A37) in tRNAs that read codons beginning with adenine. Is probably involved in the transfer of the threonylcarbamoyl moiety of threonylcarbamoyl-AMP (TC-AMP) to the N6 group of A37. The sequence is that of tRNA N6-adenosine threonylcarbamoyltransferase from Thermofilum pendens (strain DSM 2475 / Hrk 5).